The chain runs to 291 residues: Phosphatidylglycerol--prolipoprotein diacylglyceryl transferase (291 aa).

A run of 7 helical transmembrane segments spans residues 21 to 41 (VALHWYGLMYLVGFVFAMWLA), 60 to 80 (LLYAGFLGVFLGGRIGYVLFY), 96 to 116 (WDGGMSFHGGLIGVILVMIIF), 130 to 150 (FIAPLIPFGLGAGRLGNFING), 198 to 218 (SQLYELALEGVVLFIILNLFI), 225 to 245 (GAVSGLFLIGYGAFRIIVEFF), and 260 to 280 (ISMGQILSIPMIIAGAIMMVW). An a 1,2-diacyl-sn-glycero-3-phospho-(1'-sn-glycerol)-binding site is contributed by Arg143.

It belongs to the Lgt family.

The protein resides in the cell inner membrane. The enzyme catalyses L-cysteinyl-[prolipoprotein] + a 1,2-diacyl-sn-glycero-3-phospho-(1'-sn-glycerol) = an S-1,2-diacyl-sn-glyceryl-L-cysteinyl-[prolipoprotein] + sn-glycerol 1-phosphate + H(+). The protein operates within protein modification; lipoprotein biosynthesis (diacylglyceryl transfer). Catalyzes the transfer of the diacylglyceryl group from phosphatidylglycerol to the sulfhydryl group of the N-terminal cysteine of a prolipoprotein, the first step in the formation of mature lipoproteins. This Salmonella newport (strain SL254) protein is Phosphatidylglycerol--prolipoprotein diacylglyceryl transferase.